We begin with the raw amino-acid sequence, 303 residues long: ATP synthase gamma chain (303 aa).

Belongs to the ATPase gamma chain family. In terms of assembly, F-type ATPases have 2 components, CF(1) - the catalytic core - and CF(0) - the membrane proton channel. CF(1) has five subunits: alpha(3), beta(3), gamma(1), delta(1), epsilon(1). CF(0) has three main subunits: a, b and c.

It localises to the cell membrane. Its function is as follows. Produces ATP from ADP in the presence of a proton gradient across the membrane. The gamma chain is believed to be important in regulating ATPase activity and the flow of protons through the CF(0) complex. The protein is ATP synthase gamma chain of Oenococcus oeni (strain ATCC BAA-331 / PSU-1).